Consider the following 150-residue polypeptide: Ribonuclease K6 (150 aa).

The signal sequence occupies residues Met1 to Ala23. His38 acts as the Proton acceptor in catalysis. Intrachain disulfides connect Cys46-Cys104, Cys60-Cys114, Cys78-Cys129, and Cys85-Cys92. N-linked (GlcNAc...) asparagine glycosylation occurs at Asn55. Substrate-binding positions include Lys61 to Thr65 and Lys86. An N-linked (GlcNAc...) asparagine glycan is attached at Asn100. A substrate-binding site is contributed by Arg105. His145 serves as the catalytic Proton donor.

This sequence belongs to the pancreatic ribonuclease family. Interacts (via N-terminus) with bacterial lipopolysaccharide (LPS).

It is found in the secreted. The protein resides in the lysosome. The protein localises to the cytoplasmic granule. In terms of biological role, ribonuclease which shows a preference for the pyrimidines uridine and cytosine. Has potent antibacterial activity against a range of Gram-positive and Gram-negative bacteria, including P.aeruginosa, A.baumanii, M.luteus, S.aureus, E.faecalis, E.faecium, S.saprophyticus and E.coli. Causes loss of bacterial membrane integrity, and also promotes agglutination of Gram-negative bacteria. Probably contributes to urinary tract sterility. Bactericidal activity is independent of RNase activity. In Papio hamadryas (Hamadryas baboon), this protein is Ribonuclease K6 (RNASE6).